A 69-amino-acid polypeptide reads, in one-letter code: Putative membrane protein insertion efficiency factor (69 aa).

Belongs to the UPF0161 family.

The protein localises to the cell inner membrane. Functionally, could be involved in insertion of integral membrane proteins into the membrane. The polypeptide is Putative membrane protein insertion efficiency factor (Dechloromonas aromatica (strain RCB)).